The following is a 240-amino-acid chain: 45 kDa antigen (240 aa).

Fibronectin type-III domains follow at residues 1–109 and 110–210; these read EFPD…FHTL and ANGT…KSGH.

This is 45 kDa antigen from Taenia ovis (Sheep tapeworm).